The sequence spans 190 residues: MFLDVVRKHGNGRVAYCYARALLDIVVDSADSICEEIKLVRAALTADGEVRAFFANPVTPKENKIAVLQALGKSCKLSRTLVGFVCVVVKDGKFGLLSDMFEEFFVLLMHARGQFALEITTASPVSAAEEKRILSIVKSEYGEPATVTKRVDPAILGGFIAKADSLVIDASFAGHLRELERVSRSVVCGV.

It belongs to the ATPase delta chain family. As to quaternary structure, F-type ATPases have 2 components, F(1) - the catalytic core - and F(0) - the membrane proton channel. F(1) has five subunits: alpha(3), beta(3), gamma(1), delta(1), epsilon(1). F(0) has three main subunits: a(1), b(2) and c(10-14). The alpha and beta chains form an alternating ring which encloses part of the gamma chain. F(1) is attached to F(0) by a central stalk formed by the gamma and epsilon chains, while a peripheral stalk is formed by the delta and b chains.

It is found in the cell inner membrane. F(1)F(0) ATP synthase produces ATP from ADP in the presence of a proton or sodium gradient. F-type ATPases consist of two structural domains, F(1) containing the extramembraneous catalytic core and F(0) containing the membrane proton channel, linked together by a central stalk and a peripheral stalk. During catalysis, ATP synthesis in the catalytic domain of F(1) is coupled via a rotary mechanism of the central stalk subunits to proton translocation. Its function is as follows. This protein is part of the stalk that links CF(0) to CF(1). It either transmits conformational changes from CF(0) to CF(1) or is implicated in proton conduction. The protein is ATP synthase subunit delta of Anaplasma marginale (strain Florida).